A 307-amino-acid chain; its full sequence is Elongation factor Ts (307 aa).

Residues 80-83 (TDFV) form an involved in Mg(2+) ion dislocation from EF-Tu region.

This sequence belongs to the EF-Ts family.

It is found in the cytoplasm. Associates with the EF-Tu.GDP complex and induces the exchange of GDP to GTP. It remains bound to the aminoacyl-tRNA.EF-Tu.GTP complex up to the GTP hydrolysis stage on the ribosome. This chain is Elongation factor Ts, found in Albidiferax ferrireducens (strain ATCC BAA-621 / DSM 15236 / T118) (Rhodoferax ferrireducens).